Here is a 276-residue protein sequence, read N- to C-terminus: Large ribosomal subunit protein uL2 (276 aa).

Positions 224 to 276 (AMNPVDHPLGGGEGKSSGGRHPVTPWGKPTKGYKTRNKKKPSSKLIVKRRGQK) are disordered. Basic residues predominate over residues 254 to 276 (KGYKTRNKKKPSSKLIVKRRGQK).

The protein belongs to the universal ribosomal protein uL2 family. Part of the 50S ribosomal subunit. Forms a bridge to the 30S subunit in the 70S ribosome.

Its function is as follows. One of the primary rRNA binding proteins. Required for association of the 30S and 50S subunits to form the 70S ribosome, for tRNA binding and peptide bond formation. It has been suggested to have peptidyltransferase activity; this is somewhat controversial. Makes several contacts with the 16S rRNA in the 70S ribosome. This is Large ribosomal subunit protein uL2 from Solidesulfovibrio magneticus (strain ATCC 700980 / DSM 13731 / RS-1) (Desulfovibrio magneticus).